Consider the following 128-residue polypeptide: UPF0325 protein YaeH (128 aa).

The protein belongs to the UPF0325 family.

This Shigella boydii serotype 18 (strain CDC 3083-94 / BS512) protein is UPF0325 protein YaeH.